A 112-amino-acid chain; its full sequence is DNA-binding protein Bv3F (112 aa).

The interval 65 to 92 (KRNSKRMSTVPKYRDPATGKTWSGRGRQ) is disordered. DNA-binding regions lie at residues 89-94 (RGRQPA) and 89-95 (RGRQPAW).

This sequence belongs to the histone-like protein H-NS family. As to quaternary structure, homodimer that oligomerizes on DNA into higher-order complexes that form bridges between disparate regions of DNA compacting it.

The protein resides in the cytoplasm. Its subcellular location is the nucleoid. A DNA-binding protein implicated in transcriptional repression and chromosome organization and compaction. Binds in the minor groove of AT-rich DNA. Binds nucleation sites in AT-rich DNA and bridges them, forming higher-order nucleoprotein complexes and condensing the chromosome. As many horizontally transferred genes are AT-rich, it plays a central role in silencing foreign genes. The protein is DNA-binding protein Bv3F of Burkholderia vietnamiensis (strain G4 / LMG 22486) (Burkholderia cepacia (strain R1808)).